The sequence spans 396 residues: Major capsid protein (396 aa).

Belongs to the NCLDV major capsid protein family.

It is found in the virion. Functionally, major protein of the capsid. This Pyramimonas plurioculata (PoV01) protein is Major capsid protein (MCP).